Reading from the N-terminus, the 103-residue chain is Carboxysome shell protein CsoS1 (103 aa).

In terms of domain architecture, BMC spans 9 to 94 (ALGMIETRGL…PHREVEPALG (86 aa)).

It belongs to the bacterial microcompartments protein family. CsoS1 subfamily. As to quaternary structure, homohexamer with a small central pore. Forms a CsoS2-CsoS1-RuBisCO complex.

Its subcellular location is the carboxysome. In terms of biological role, one of the shell proteins of the carboxysome, a polyhedral inclusion where RuBisCO (ribulose bisphosphate carboxylase, ccbL-ccbS) is sequestered. Assembles into hexamers which make sheets that form the facets of the polyhedral carboxysome. In Prochlorococcus marinus (strain MIT 9313), this protein is Carboxysome shell protein CsoS1.